The chain runs to 212 residues: Peptide methionine sulfoxide reductase MsrA (212 aa).

Cysteine 52 is an active-site residue.

The protein belongs to the MsrA Met sulfoxide reductase family.

The enzyme catalyses L-methionyl-[protein] + [thioredoxin]-disulfide + H2O = L-methionyl-(S)-S-oxide-[protein] + [thioredoxin]-dithiol. It carries out the reaction [thioredoxin]-disulfide + L-methionine + H2O = L-methionine (S)-S-oxide + [thioredoxin]-dithiol. Has an important function as a repair enzyme for proteins that have been inactivated by oxidation. Catalyzes the reversible oxidation-reduction of methionine sulfoxide in proteins to methionine. The polypeptide is Peptide methionine sulfoxide reductase MsrA (Shigella dysenteriae serotype 1 (strain Sd197)).